A 398-amino-acid polypeptide reads, in one-letter code: Tyrosine--tRNA ligase (398 aa).

The short motif at 48 to 57 (PTGADIHLGH) is the 'HIGH' region element. A 'KMSKS' region motif is present at residues 235 to 239 (KMSKS). K238 provides a ligand contact to ATP. The S4 RNA-binding domain occupies 334–398 (VKLAYLLGAT…GKNKFMRLVP (65 aa)).

Belongs to the class-I aminoacyl-tRNA synthetase family. TyrS type 2 subfamily. As to quaternary structure, homodimer.

It is found in the cytoplasm. The catalysed reaction is tRNA(Tyr) + L-tyrosine + ATP = L-tyrosyl-tRNA(Tyr) + AMP + diphosphate + H(+). Functionally, catalyzes the attachment of tyrosine to tRNA(Tyr) in a two-step reaction: tyrosine is first activated by ATP to form Tyr-AMP and then transferred to the acceptor end of tRNA(Tyr). This chain is Tyrosine--tRNA ligase, found in Nostoc sp. (strain PCC 7120 / SAG 25.82 / UTEX 2576).